The following is a 666-amino-acid chain: Probable cytochrome c oxidase subunit 1 (666 aa).

2 helical membrane-spanning segments follow: residues 16 to 36 (IPLI…VWVV) and 57 to 77 (IGVM…SDAI). His-105 provides a ligand contact to heme b. 13 helical membrane-spanning segments follow: residues 108–128 (IMIF…VVPL), 142–162 (SVGF…LVIG), 192–212 (SLQI…TTVL), 234–254 (SNLL…MLLL), 277–297 (LIWA…FGIF), 315–335 (MVLA…HHFF), 346–366 (IFGI…YNWL), 380–400 (MLWA…GVLV), 413–433 (MFLV…GAFA), 456–476 (FWFT…AGML), 493–513 (WMLV…CQIM), 591–611 (SPTG…LIWH), and 612–632 (IWWM…VFAW). The Cu cation site is built by His-283, Tyr-287, His-332, and His-333. Residues 283 to 287 (HPEVY) constitute a cross-link (1'-histidyl-3'-tyrosine (His-Tyr)). Residues His-418 and His-420 each contribute to the heme b site.

This sequence belongs to the heme-copper respiratory oxidase family.

Its subcellular location is the cell membrane. The catalysed reaction is 4 Fe(II)-[cytochrome c] + O2 + 8 H(+)(in) = 4 Fe(III)-[cytochrome c] + 2 H2O + 4 H(+)(out). Its pathway is energy metabolism; oxidative phosphorylation. In Bradyrhizobium diazoefficiens (strain JCM 10833 / BCRC 13528 / IAM 13628 / NBRC 14792 / USDA 110), this protein is Probable cytochrome c oxidase subunit 1.